A 149-amino-acid chain; its full sequence is 3-dehydroquinate dehydratase (149 aa).

Tyrosine 26 functions as the Proton acceptor in the catalytic mechanism. 3 residues coordinate substrate: asparagine 77, histidine 83, and aspartate 90. Histidine 103 functions as the Proton donor in the catalytic mechanism. Residues 104 to 105 (LS) and arginine 114 each bind substrate.

This sequence belongs to the type-II 3-dehydroquinase family. As to quaternary structure, homododecamer.

The enzyme catalyses 3-dehydroquinate = 3-dehydroshikimate + H2O. Its pathway is metabolic intermediate biosynthesis; chorismate biosynthesis; chorismate from D-erythrose 4-phosphate and phosphoenolpyruvate: step 3/7. Its function is as follows. Catalyzes a trans-dehydration via an enolate intermediate. In Aliivibrio salmonicida (strain LFI1238) (Vibrio salmonicida (strain LFI1238)), this protein is 3-dehydroquinate dehydratase.